The chain runs to 595 residues: MPACCSWNDVLQYETNKVTRIQSTNYGTVKWVLHMIVFSYISFALVSDKLYQRKEPVISSVHTKVKGIAEVTENVTEGGVTKLGHSIFDTADYTFPLQGNSFFVMTNYVKSEGQVQTLCPEYPRRGAQCSSDRRCKKGWMDPQSKGIQTGRCVPYDKTRKTCEVSAWCPTEEEKEAPRPALLRSAENFTVLIKNNIHFPGHNYTTRNILPTMNGSCTFHKTWDPQCSIFRLGDIFQEAGENFTEVAVQGGIMGIEIYWDCNLDSWSHHCRPRYSFRRLDDKNTDESFVPGYNFRYAKYYKENNVEKRTLIKAFGIRFDILVFGTGGKFDIIQLVVYIGSTLSYFGLATVCIDLLINTYSSAFCRSGVYPYCKCCEPCTVNEYYYRKKCESIMEPKPTLKYVSFVDEPHIRMVDQQLLGKSLQVVKGQEVPRPQMDFSDLSRLSLSLHDSPLTPGQSEEIQLLHEEVAPKSGDSPSWCQCGNCLPSRLPEQRRALEELCCRRKPGRCITTSKLFHKLVLSRDTLQLLLLYQDPLLVLGEEATNSRLRHRAYRCYATWRFGSQDMADFAILPSCCRWRIRKEFPKTEGQYSGFKYPY.

The Cytoplasmic portion of the chain corresponds to 1-22; sequence MPACCSWNDVLQYETNKVTRIQ. C4 carries the S-palmitoyl cysteine lipid modification. A helical transmembrane segment spans residues 23-46; it reads STNYGTVKWVLHMIVFSYISFALV. The Extracellular segment spans residues 47-328; that stretch reads SDKLYQRKEP…ILVFGTGGKF (282 aa). N74 carries N-linked (GlcNAc...) asparagine glycosylation. Intrachain disulfides connect C119–C168, C129–C152, and C135–C162. ADP-ribosylarginine; by ART2B occurs at positions 125 and 133. N-linked (GlcNAc...) asparagine glycosylation occurs at N187. T189 contributes to the ATP binding site. N-linked (GlcNAc...) asparagine glycans are attached at residues N202 and N213. C216 and C226 are oxidised to a cystine. An N-linked (GlcNAc...) asparagine glycan is attached at N241. C260 and C269 form a disulfide bridge. Residues R294 and K311 each coordinate ATP. A helical transmembrane segment spans residues 329 to 353; the sequence is DIIQLVVYIGSTLSYFGLATVCIDL. S342 lines the Na(+) pocket. Topologically, residues 354–595 are cytoplasmic; sequence LINTYSSAFC…GQYSGFKYPY (242 aa). The interval 360–377 is C-cys anchor; sequence SAFCRSGVYPYCKCCEPC. 3 S-palmitoyl cysteine lipidation sites follow: C363, C374, and C377. Residue S390 is modified to Phosphoserine. The segment at 395 to 595 is cytoplasmic ballast; sequence KPTLKYVSFV…GQYSGFKYPY (201 aa). Zn(2+) is bound by residues C479, C499, and C506. Positions 546, 547, 550, and 567 each coordinate GTP. C572 contributes to the Zn(2+) binding site. K583, S589, and G590 together coordinate GTP.

It belongs to the P2X receptor family. Homotrimers. Interacts with LAMA3, ITGB2, ACTB, ACTN4, SVIL, MPP3, HSPA1, HSPCB, HSPA8, PIK230 and PTPRB. Interacts (via C-terminus) with EMP2. Phosphorylation results in its inactivation. In terms of processing, ADP-ribosylation at Arg-125 is necessary and sufficient to activate P2RX7 and gate the channel. Post-translationally, palmitoylation of several cysteines in the C-terminal cytoplasmic tail is required for efficient localization to cell surface. Palmitoylation prevents channel desensitization by physically anchoring the palmitoylated groups to the membrane.

It localises to the cell membrane. The enzyme catalyses Ca(2+)(in) = Ca(2+)(out). It catalyses the reaction K(+)(in) = K(+)(out). The catalysed reaction is Na(+)(in) = Na(+)(out). Its activity is regulated as follows. Activated by high extracellular ATP levels (0.1-2.5 mM). The synthetic analog 2'(3')-O-(4-benzoylbenzoyl)ATP (BzATP) acts as a potent agonist. Does not undergo desensitization, instead, undergoes a facilitation process where currents progressively increase with repetitive or prolonged agonist application. Palmitoylation prevents channel desensitization. The permeability of the P2RX7 channel is modulated by the amount of cholesterol in the plasma membrane. ATP-gated nonselective transmembrane cation channel. Requires high millimolar-range concentrations of ATP to become activated. ATP binding trigers the rapid opening of the channel and allows Na(+) and Ca(2+) influx and K(+) efflux. Has also the ability to form a large pore in the cell membrane, allowing the passage of large cationic molecules. In microglia, may mediate NADPH transport across the plasma membrane. In immune cells, P2RX7 acts as a molecular sensor in pathological inflammatory states by detecting and responding to high local concentrations of extracellar ATP. In microglial cells, P2RX7 activation leads to the release of pro-inflammatory cytokines, such as IL-1beta and IL-18, through the activation of the NLRP3 inflammasome and caspase-1. Cooperates with KCNK6 to activate NLRP3 inflammasome. Activates death pathways leading to apoptosis and autophagy. Activates death pathways leading to pyroptosis. The protein is P2X purinoceptor 7 (P2rx7) of Mus musculus (Mouse).